A 771-amino-acid polypeptide reads, in one-letter code: DNA helicase/primase complex-associated protein (771 aa).

This sequence belongs to the herpesviridae HEPA family. As to quaternary structure, associates with the primase and the helicase to form the helicase-primase complex. Interacts with the origin-binding protein. Interacts with the polymerase catalytic subunit.

It localises to the host nucleus. Component of the helicase/primase complex. Unwinds the DNA at the replication forks and generates single-stranded DNA for both leading and lagging strand synthesis. The primase synthesizes short RNA primers on the lagging strand that the polymerase presumably elongates using dNTPs. The primase-associated factor has no known catalytic activity in the complex and may serve to facilitate the formation of the replisome by directly interacting with the origin-binding protein and the polymerase. This Varicella-zoster virus (strain Oka vaccine) (HHV-3) protein is DNA helicase/primase complex-associated protein.